Here is a 222-residue protein sequence, read N- to C-terminus: tRNA (guanine-N(1)-)-methyltransferase (222 aa).

Residues glycine 110 and 130–135 (IGDYVL) each bind S-adenosyl-L-methionine.

The protein belongs to the RNA methyltransferase TrmD family. As to quaternary structure, homodimer.

The protein resides in the cytoplasm. The catalysed reaction is guanosine(37) in tRNA + S-adenosyl-L-methionine = N(1)-methylguanosine(37) in tRNA + S-adenosyl-L-homocysteine + H(+). Its function is as follows. Specifically methylates guanosine-37 in various tRNAs. The polypeptide is tRNA (guanine-N(1)-)-methyltransferase (Protochlamydia amoebophila (strain UWE25)).